A 583-amino-acid polypeptide reads, in one-letter code: Probable cysteine--tRNA ligase, mitochondrial (583 aa).

C82 lines the Zn(2+) pocket. Position 83 (G83) interacts with L-cysteine. The short motif at 84–94 (PTVYSSSHIGH) is the 'HIGH' region element. L-cysteine is bound at residue T123. The 'KIIK' region motif lies at 128-131 (KIIN). Residues C271, H296, and E300 each contribute to the Zn(2+) site. H296 contacts L-cysteine. Residues 337-341 (KMSKS) carry the 'KMSKS' region motif. K340 lines the ATP pocket.

This sequence belongs to the class-I aminoacyl-tRNA synthetase family. Zn(2+) is required as a cofactor.

Its subcellular location is the mitochondrion. The enzyme catalyses tRNA(Cys) + L-cysteine + ATP = L-cysteinyl-tRNA(Cys) + AMP + diphosphate. In terms of biological role, mitochondrial cysteine-specific aminoacyl-tRNA synthetase that catalyzes the ATP-dependent ligation of cysteine to tRNA(Cys). Functionally, in addition to its role as an aminoacyl-tRNA synthetase, has also cysteine persulfide synthase activity. Produces reactive persulfide species such as cysteine persulfide (CysSSH) from substrate cysteine and mediate direct incorporation of CysSSH into proteins during translations, resulting in protein persulfides and polysulfides. CysSSHs behave as potent antioxidants and cellular protectants. In Dictyostelium discoideum (Social amoeba), this protein is Probable cysteine--tRNA ligase, mitochondrial (mcysS).